Here is a 190-residue protein sequence, read N- to C-terminus: Scytalone dehydratase-like protein Arp1 (190 aa).

Tyr-67 is a binding site for substrate. Residues His-102 and His-127 contribute to the active site. Asn-148 lines the substrate pocket.

It belongs to the scytalone dehydratase family. In terms of assembly, homotrimer. Each subunit contains an active site, located in the central part of the hydrophobic core of the monomer, which functions independently.

Scytalone dehydratase-like protein; part of the Pks2 gene cluster that mediates the formation of infectious structures (appressoria), enabling these fungi to kill insects faster. The product of the Pks2 gene cluster is different from the one of Pks1 and has still not been identified. The chain is Scytalone dehydratase-like protein Arp1 from Metarhizium anisopliae (strain ARSEF 549).